The sequence spans 368 residues: Peptide chain release factor 2 (368 aa).

Position 250 is an N5-methylglutamine (Gln250).

This sequence belongs to the prokaryotic/mitochondrial release factor family. Post-translationally, methylated by PrmC. Methylation increases the termination efficiency of RF2.

It is found in the cytoplasm. Functionally, peptide chain release factor 2 directs the termination of translation in response to the peptide chain termination codons UGA and UAA. In Rickettsia africae (strain ESF-5), this protein is Peptide chain release factor 2.